The following is a 44-amino-acid chain: Photosystem I reaction center subunit IX (44 aa).

A helical membrane pass occupies residues 7-27; it reads YLSVAPVLTTLWFGSLAGLLI.

This sequence belongs to the PsaJ family.

It localises to the plastid. Its subcellular location is the chloroplast thylakoid membrane. In terms of biological role, may help in the organization of the PsaE and PsaF subunits. This Liriodendron tulipifera (Tuliptree) protein is Photosystem I reaction center subunit IX.